Here is a 361-residue protein sequence, read N- to C-terminus: Chorismate synthase (361 aa).

NADP(+) contacts are provided by Arg48 and Arg54. FMN contacts are provided by residues 125–127 (RSS), 238–239 (NA), Gly278, 293–297 (KPTSS), and Arg319.

The protein belongs to the chorismate synthase family. In terms of assembly, homotetramer. It depends on FMNH2 as a cofactor.

It carries out the reaction 5-O-(1-carboxyvinyl)-3-phosphoshikimate = chorismate + phosphate. It functions in the pathway metabolic intermediate biosynthesis; chorismate biosynthesis; chorismate from D-erythrose 4-phosphate and phosphoenolpyruvate: step 7/7. Functionally, catalyzes the anti-1,4-elimination of the C-3 phosphate and the C-6 proR hydrogen from 5-enolpyruvylshikimate-3-phosphate (EPSP) to yield chorismate, which is the branch point compound that serves as the starting substrate for the three terminal pathways of aromatic amino acid biosynthesis. This reaction introduces a second double bond into the aromatic ring system. This is Chorismate synthase from Cronobacter sakazakii (strain ATCC BAA-894) (Enterobacter sakazakii).